The sequence spans 203 residues: Small ribosomal subunit protein uS4c (203 aa).

The S4 RNA-binding domain maps to 89–152 (MRLDNILFRL…QSRTLIQNSL (64 aa)).

This sequence belongs to the universal ribosomal protein uS4 family. Part of the 30S ribosomal subunit. Contacts protein S5. The interaction surface between S4 and S5 is involved in control of translational fidelity.

It localises to the plastid. Functionally, one of the primary rRNA binding proteins, it binds directly to 16S rRNA where it nucleates assembly of the body of the 30S subunit. With S5 and S12 plays an important role in translational accuracy. The polypeptide is Small ribosomal subunit protein uS4c (rps4) (Orobanche minor (Small broomrape)).